Reading from the N-terminus, the 233-residue chain is Ribosomal RNA small subunit methyltransferase G (233 aa).

S-adenosyl-L-methionine is bound by residues glycine 96, leucine 101, 146 to 147, and arginine 160; that span reads LE.

Belongs to the methyltransferase superfamily. RNA methyltransferase RsmG family.

The protein localises to the cytoplasm. The catalysed reaction is guanosine(527) in 16S rRNA + S-adenosyl-L-methionine = N(7)-methylguanosine(527) in 16S rRNA + S-adenosyl-L-homocysteine. Its function is as follows. Specifically methylates the N7 position of guanine in position 527 of 16S rRNA. The chain is Ribosomal RNA small subunit methyltransferase G from Sphingopyxis alaskensis (strain DSM 13593 / LMG 18877 / RB2256) (Sphingomonas alaskensis).